Here is a 360-residue protein sequence, read N- to C-terminus: DNA integrity scanning protein DisA (360 aa).

The 139-residue stretch at 11 to 149 (ELDLSSILQF…ENMKYTLKDI (139 aa)) folds into the DAC domain. ATP is bound by residues Gly-78, Leu-96, and 109-113 (MRHRT).

This sequence belongs to the DisA family. Homooligomer. Interacts with RadA. It depends on Mg(2+) as a cofactor.

The protein resides in the cytoplasm. It carries out the reaction 2 ATP = 3',3'-c-di-AMP + 2 diphosphate. With respect to regulation, diadenylate cyclase (DAC) activity is inhibited 2-fold by Holliday junction (HJ) DNA, further addition of RecG inhibits DAC activity 11-fold; RecG may relocate DisA from the HJ. DAC is inhibited by the interaction with RadA. Diadenylate cyclase activity is not affected by ssDNA or dsDNA, but three- and four-way junctions strongly inhibit the activity of DisA, suggesting the enzyme is regulated by branched nucleic acids. Participates in a DNA-damage check-point that is active prior to asymmetric division when DNA is damaged. Forms globular foci that rapidly scan along the chromosomes during sporulation, searching for lesions. Its ability to scan through the chromosome rapidly is due to its non-specific DNA-binding. When a lesion is present, DisA pauses at the lesion site. This triggers a cellular response that culminates in a temporary block in sporulation initiation. It is required, at least partially, to inhibit the activity of the transcription factor spo0A, which controls, among others, early sporulation genes. In B.subtilis c-di-AMP is a second messenger that mediates growth, DNA repair and cell wall homeostasis; it is toxic when present in excess. Limits the replication fork reggression activity of RecG; DisA inhibits the ATPase activity of RecG. By limiting RecG-mediated fork regression, DisA provides time for removal of potentially lethal DNA lesions. Functionally, one of 3 paralogous diadenylate cyclases (DAC) in this bacteria. Has diadenylate cyclase activity, catalyzing the condensation of 2 ATP molecules into cyclic di-AMP (c-di-AMP). c-di-AMP acts as a signaling molecule that couples DNA integrity with progression of sporulation. The rise in c-di-AMP level generated by DisA while scanning the chromosome operates as a positive signal that advances sporulation; upon encountering a lesion, the DisA focus arrests at the damaged site and halts c-di-AMP synthesis. Does not convert GTP to c-di-GMP. In Bacillus subtilis (strain 168), this protein is DNA integrity scanning protein DisA.